The chain runs to 98 residues: Peptide YY (98 aa).

The signal sequence occupies residues 1–28 (MVAVRRPWPVTVAMLLILLACLGALVDA). Ser-41 carries the phosphoserine modification. Tyr-64 carries the tyrosine amide modification. Positions 68 to 98 (DVPAALFSKLLFTDDSDSENLPFRPEGLDQW) are excised as a propeptide.

It belongs to the NPY family. In terms of processing, the peptide YY form is cleaved at Pro-30 by the prolyl endopeptidase FAP (seprase) activity (in vitro) to generate peptide YY(3-36).

The protein localises to the secreted. Functionally, this gut peptide inhibits exocrine pancreatic secretion, has a vasoconstrictory action and inhibitis jejunal and colonic mobility. The polypeptide is Peptide YY (Pyy) (Mus musculus (Mouse)).